Reading from the N-terminus, the 519-residue chain is 3-octaprenyl-4-hydroxybenzoate carboxy-lyase (519 aa).

Asn-177 serves as a coordination point for Mn(2+). Residues 180–182 (IYR), 194–196 (RWL), and 199–200 (RG) each bind prenylated FMN. Residue Glu-243 participates in Mn(2+) binding. Catalysis depends on Asp-318, which acts as the Proton donor.

The protein belongs to the UbiD family. In terms of assembly, homohexamer. Prenylated FMN is required as a cofactor. Mn(2+) serves as cofactor.

It localises to the cell membrane. The catalysed reaction is a 4-hydroxy-3-(all-trans-polyprenyl)benzoate + H(+) = a 2-(all-trans-polyprenyl)phenol + CO2. Its pathway is cofactor biosynthesis; ubiquinone biosynthesis. Functionally, catalyzes the decarboxylation of 3-octaprenyl-4-hydroxy benzoate to 2-octaprenylphenol, an intermediate step in ubiquinone biosynthesis. In Burkholderia thailandensis (strain ATCC 700388 / DSM 13276 / CCUG 48851 / CIP 106301 / E264), this protein is 3-octaprenyl-4-hydroxybenzoate carboxy-lyase.